Here is a 638-residue protein sequence, read N- to C-terminus: MNASEKFIAAKAHVDEAAVAPLPNSRKIHVEGSRPDIRVPMREISQADTPASMGAEPNPPIFVYDCSGPYTDPTAKIDIRSGLVALRQQWIEERGDTEVLADLSSEFGRSRAADKALDELRFPGLHRHPRRAKAGMNVSQMHYARRGLITPEMEYVAIRENMNRAAYVESLRTAGPTGEKMAKLLTRQHPGQSFGASIPEEITPEFVRSEVARGRAIIPNNINHPESEPMIIGRNFLVKINANIGNSALGSSISEEVDKMTWAIRWGGDTVMDLSTGKNIHETREWIIRNSPVPIGTVPIYQALEKVDGKAEELTWEIFRDTLIEQAEQGVDYFTIHAGVLLRYVPMTANRMTGIVSRGGSIMAKWCLAHHKESFLYTHFEDICDIMKAYDVAFSLGDGLRPGSIYDANDDAQLGELKTLGELTDIAWKHDVQTIIEGPGHVPMHLIKENMDLQLEHCKEAPFYTLGPLTTDIAPGYDHITSGIGAAQIGWYGTAMLCYVTPKEHLGLPNKQDVKEGIITYKLAAHAADLAKGHPGAQIRDNALSKARFEFRWEDQFNLGLDPDKAKEFHDETLPKDSAKVAHFCSMCGPHFCSMKITQDVRDFAAKEGLKEDEALAKGMEVKAVEFVKSGAEVYRQV.

Residues Asn-243, Met-272, Tyr-301, His-337, 357–359, 398–401, and Glu-437 contribute to the substrate site; these read SRG and DGLR. His-441 lines the Zn(2+) pocket. A substrate-binding site is contributed by Tyr-464. His-505 lines the Zn(2+) pocket. [4Fe-4S] cluster contacts are provided by Cys-585, Cys-588, and Cys-593.

The protein belongs to the ThiC family. As to quaternary structure, homodimer. The cofactor is [4Fe-4S] cluster.

The catalysed reaction is 5-amino-1-(5-phospho-beta-D-ribosyl)imidazole + S-adenosyl-L-methionine = 4-amino-2-methyl-5-(phosphooxymethyl)pyrimidine + CO + 5'-deoxyadenosine + formate + L-methionine + 3 H(+). It participates in cofactor biosynthesis; thiamine diphosphate biosynthesis. Its function is as follows. Catalyzes the synthesis of the hydroxymethylpyrimidine phosphate (HMP-P) moiety of thiamine from aminoimidazole ribotide (AIR) in a radical S-adenosyl-L-methionine (SAM)-dependent reaction. This chain is Phosphomethylpyrimidine synthase, found in Aromatoleum aromaticum (strain DSM 19018 / LMG 30748 / EbN1) (Azoarcus sp. (strain EbN1)).